We begin with the raw amino-acid sequence, 546 residues long: Hexose oxidase (546 aa).

Residues 40-222 form the FAD-binding PCMH-type domain; sequence IGTNIDFVYV…TKYYFKDLPM (183 aa). The segment at residues 79-138 is a cross-link (6-(S-cysteinyl)-8alpha-(pros-histidyl)-FAD (His-Cys)); that stretch reads HCYEDFVFDECVKAIINVTGLVESGYDDDRGYFVSSGDTNWGSFKTLFRDHGRVLPGGSC. Asn-95 and Asn-358 each carry an N-linked (GlcNAc...) asparagine glycan.

Belongs to the oxygen-dependent FAD-linked oxidoreductase family. In terms of assembly, homodimer. It depends on FAD as a cofactor. In terms of processing, cleaved into 40 kDa and 29 kDa cleavage products, but the 2 polypeptide chains do not separate and seem to be physically linked together. Post-translationally, the FAD cofactor is bound via a bicovalent 6-S-cysteinyl, 8alpha-N1-histidyl FAD linkage.

The enzyme catalyses beta-D-glucose + O2 = D-glucono-1,5-lactone + H2O2. It catalyses the reaction D-galactose + O2 = D-galactono-1,5-lactone + H2O2. The catalysed reaction is D-maltose + O2 = D-maltobiono-1,5-lactone + H2O2. It carries out the reaction D-cellobiose + O2 = D-cellobiono-1,5-lactone + H2O2. The enzyme catalyses beta-lactose + O2 = lactobiono-1,5-lactone + H2O2. In terms of biological role, catalyzes the selective oxidation of C1 hydroxyl moieties on mono- and disaccharides with concomitant reduction of molecular oxygen to hydrogen peroxide. This results in the formation of the corresponding lactones, which typically undergo spontaneous hydrolysis. Hexose oxidase is able to oxidize a variety of substrates including D-glucose, D-galactose, maltose, cellobiose, and lactose. In Chondrus crispus (Carrageen Irish moss), this protein is Hexose oxidase (HOX).